A 2039-amino-acid chain; its full sequence is PHD finger protein 3 (2039 aa).

Residues Ser97 and Ser125 each carry the phosphoserine modification. Residues 144 to 168 show a composition bias toward polar residues; it reads STIAKRSNAAPLSNTKKASGKTVST. Residues 144–178 form a disordered region; sequence STIAKRSNAAPLSNTKKASGKTVSTAKAGVKQPER. 2 positions are modified to phosphoserine: Ser283 and Ser299. Over residues 460–472 the composition is skewed to basic and acidic residues; the sequence is ESHETANLQDDRN. 3 disordered regions span residues 460–492, 528–555, and 596–685; these read ESHETANLQDDRNSQSSSVSYLESKSVKSKHTK, VKRNTDVPESQQNFHRPVKVRKKQIDKE, and LSDK…SLDE. Residues 473–483 show a composition bias toward low complexity; that stretch reads SQSSSVSYLES. A compositionally biased stretch (basic and acidic residues) spans 596 to 612; it reads LSDKSHAHPGCLKEPHH. Residues 617–640 are compositionally biased toward polar residues; it reads GHVSHSSQKQCHKPQQQAPAMKTN. The span at 642–670 shows a compositional bias: basic and acidic residues; that stretch reads HVKEELEHPGVEHFKEEDKLKLKKPEKNL. Lys644 is covalently cross-linked (Glycyl lysine isopeptide (Lys-Gly) (interchain with G-Cter in SUMO2)). A Phosphoserine modification is found at Ser680. A PHD-type zinc finger spans residues 717–772; that stretch reads SKQCGFCKKPHGNRFMVGCGRCDDWFHGDCVGLSLSQAQQMGEEDKEYVCVKCCAE. The disordered stretch occupies residues 860–904; it reads GQPVLPRRSSEEKSEKIPKESTTVTCTGEKASKPGTHEKQEMKKK. Basic and acidic residues-rich tracts occupy residues 867–878 and 889–900; these read RSSEEKSEKIPK and KASKPGTHEKQE. In terms of domain architecture, TFIIS central spans 927–1046; it reads IRQSVRHSLK…MIEKEQREVE (120 aa). Lys964 participates in a covalent cross-link: Glycyl lysine isopeptide (Lys-Gly) (interchain with G-Cter in SUMO2). At Ser1014 the chain carries Phosphoserine. Residues 1078-1109 are disordered; that stretch reads EPAANKSLEKPEGSEKQKEEVDSMSKDTTSQH. Positions 1084 to 1102 are enriched in basic and acidic residues; it reads SLEKPEGSEKQKEEVDSMS. A phosphoserine mark is found at Ser1133, Ser1148, and Ser1178. 3 disordered regions span residues 1171–1191, 1360–1380, and 1581–1623; these read FEEEKQESPKSTFSPAPRPEM, STSHIAETPESAPPIALPPDK, and KQEE…VGKG. The span at 1581 to 1598 shows a compositional bias: basic and acidic residues; the sequence is KQEETVESKEKTLKRQLQ. Ser1614 and Ser1642 each carry phosphoserine. Disordered stretches follow at residues 1643–1684 and 1776–1800; these read PQFI…LPGL and PSKSITFTSRSTSPRTSTNFSPMRP. Positions 1666–1684 are enriched in basic and acidic residues; it reads ESKDGDSCRNGEKHMLPGL. Residues 1781-1797 are compositionally biased toward low complexity; it reads TFTSRSTSPRTSTNFSP. Arg1867 and Arg1877 each carry asymmetric dimethylarginine. Residues 1884 to 2039 are disordered; that stretch reads FYQVKDIRRP…DHTDRTKSKR (156 aa). 2 stretches are compositionally biased toward basic and acidic residues: residues 1888-1902 and 1912-2039; these read KDIRRPERRHSDPWG and PFNR…KSKR. Residues Ser1898 and Ser1925 each carry the phosphoserine modification. A Glycyl lysine isopeptide (Lys-Gly) (interchain with G-Cter in SUMO2) cross-link involves residue Lys1931.

Ubiquitous. Expression is significantly reduced or lost in glioblastomas, glioblastoma cell lines, anaplastic astrocytomas, and astrocytomas.

This is PHD finger protein 3 (PHF3) from Homo sapiens (Human).